The following is a 181-amino-acid chain: Thymidine kinase (181 aa).

Position 13–20 (13–20 (GPMFSGKS)) interacts with ATP. The Proton acceptor role is filled by E85. F115 is a binding site for substrate. Positions 140 and 143 each coordinate Zn(2+). Residue 159–163 (IEIIG) coordinates substrate. Positions 172 and 175 each coordinate Zn(2+).

Belongs to the thymidine kinase family.

It catalyses the reaction thymidine + ATP = dTMP + ADP + H(+). The polypeptide is Thymidine kinase (TK) (Yaba monkey tumor virus (strain VR587) (YMTV)).